Here is a 139-residue protein sequence, read N- to C-terminus: D-ribose pyranase (139 aa).

Catalysis depends on histidine 20, which acts as the Proton donor. Substrate contacts are provided by residues aspartate 28, histidine 106, and 128 to 130; that span reads YAN.

This sequence belongs to the RbsD / FucU family. RbsD subfamily. As to quaternary structure, homodecamer.

The protein localises to the cytoplasm. The catalysed reaction is beta-D-ribopyranose = beta-D-ribofuranose. Its pathway is carbohydrate metabolism; D-ribose degradation; D-ribose 5-phosphate from beta-D-ribopyranose: step 1/2. In terms of biological role, catalyzes the interconversion of beta-pyran and beta-furan forms of D-ribose. The sequence is that of D-ribose pyranase from Vibrio vulnificus (strain CMCP6).